The primary structure comprises 507 residues: Probable aldehyde dehydrogenase (507 aa).

219-225 (GFGVEAG) contacts NAD(+). Active-site residues include glutamate 263 and cysteine 302.

Belongs to the aldehyde dehydrogenase family.

It carries out the reaction an aldehyde + NAD(+) + H2O = a carboxylate + NADH + 2 H(+). The sequence is that of Probable aldehyde dehydrogenase from Streptomyces coelicolor (strain ATCC BAA-471 / A3(2) / M145).